Consider the following 513-residue polypeptide: Cobyric acid synthase (513 aa).

Residues 252–457 (KIDIAVIRLP…LHGIFDEEGI (206 aa)) form the GATase cobBQ-type domain. Cys-333 (nucleophile) is an active-site residue. His-449 is an active-site residue.

It belongs to the CobB/CobQ family. CobQ subfamily.

It participates in cofactor biosynthesis; adenosylcobalamin biosynthesis. Its function is as follows. Catalyzes amidations at positions B, D, E, and G on adenosylcobyrinic A,C-diamide. NH(2) groups are provided by glutamine, and one molecule of ATP is hydrogenolyzed for each amidation. The chain is Cobyric acid synthase from Lachnoclostridium phytofermentans (strain ATCC 700394 / DSM 18823 / ISDg) (Clostridium phytofermentans).